Consider the following 683-residue polypeptide: U4/U6 small nuclear ribonucleoprotein Prp3 (683 aa).

Residues 1-87 (MALSKRELDE…HSKSSSDRSR (87 aa)) enclose the PWI domain. Residues 73–107 (GRSSRHSKSSSDRSRKRELKEVFGDDSEISKESSG) show a composition bias toward basic and acidic residues. The interval 73–135 (GRSSRHSKSS…IPGPPSESPG (63 aa)) is disordered. Lys139 participates in a covalent cross-link: Glycyl lysine isopeptide (Lys-Gly) (interchain with G-Cter in SUMO2). The tract at residues 153 to 183 (IEERKKQLSFISPPTPQPKTPSSSQPERLPI) is disordered. Residue Ser164 is modified to Phosphoserine. At Thr167 the chain carries Phosphothreonine. Glycyl lysine isopeptide (Lys-Gly) (interchain with G-Cter in SUMO2) cross-links involve residues Lys244 and Lys252. Residues 416-550 (NLVEHPAQLN…VHISVYRVRN (135 aa)) are mediates interaction with SART3. Ser619 carries the phosphoserine modification.

In terms of assembly, component of the precatalytic spliceosome (spliceosome B complex). Component of the U4/U6-U5 tri-snRNP complex, a building block of the precatalytic spliceosome (spliceosome B complex). The U4/U6-U5 tri-snRNP complex is composed of the U4, U6 and U5 snRNAs and at least PRPF3, PRPF4, PRPF6, PRPF8, PRPF31, SNRNP200, TXNL4A, SNRNP40, SNRPB, SNRPD1, SNRPD2, SNRPD3, SNRPE, SNRPF, SNRPG, DDX23, CD2BP2, PPIH, SNU13, EFTUD2, SART1 and USP39, plus LSM2, LSM3, LSM4, LSM5, LSM6, LSM7 and LSM8. Interacts directly with PRPF4. Part of a heteromeric complex containing PPIH, PRPF3 and PRPF4 that is stable in the absence of RNA. Interacts with SART3; the interaction is direct and recruits the deubiquitinase USP4 to PRPF3. Interacts with PRPF19. Interacts ('Lys-63'-linked polyubiquitinated) with PRPF8 (via the MPN (JAB/Mov34) domain); may stabilize the U4/U6-U5 tri-snRNP complex. Interacts with ERCC6. Ubiquitinated. Undergoes 'Lys-63'-linked polyubiquitination by PRPF19 and deubiquitination by USP4. 'Lys-63'-linked ubiquitination increases the affinity for PRPF8 and may regulate the assembly of the U4/U6-U5 tri-snRNP complex.

Its subcellular location is the nucleus. It localises to the nucleus speckle. Its function is as follows. Plays a role in pre-mRNA splicing as component of the U4/U6-U5 tri-snRNP complex that is involved in spliceosome assembly, and as component of the precatalytic spliceosome (spliceosome B complex). This chain is U4/U6 small nuclear ribonucleoprotein Prp3 (PRPF3), found in Pongo abelii (Sumatran orangutan).